Here is a 244-residue protein sequence, read N- to C-terminus: MFRRKLTALDYHNPAGFNCKDETEFRNFIVWLEDQKIRHYKIEDRGNLRNIHSSDWPKFFEKYLRDVNCPFKIQDRQEAIDWLLGLAVRLEYGDNAEKYKDLVPDNSKTADNATKNAEPLINLDVNNPDFKAGVMALANLLQIQRHDDYLVMLKAIRILVQERLTQDAVAKANQTKEGLPVALDKHILGFDTGDAVLNEAAQILRLLHIEELRELQTKINEAIVAVQAIIADPKTDHRLGKVGR.

Residues Lys-20, Lys-62, and Lys-98 each carry the N6-acetyllysine modification.

Belongs to the RTRAF family. In terms of assembly, homodimer. Interacts with FAM98A (via N- and C-terminus). Interacts with NIN; which may prevent phosphorylation of NIN. Interacts with POLR2A. Component of a tRNA-splicing ligase complex with FAM98B, DDX1 and RTCB. As to quaternary structure, (Microbial infection) Interacts with influenza A virus (IAV) RNA polymerase subunits PA, PB1 and PB2, and nucleocapsid NP. Associates with IAV polymerase complexes both in the nucleus and cytosol. Associates with IAV ribonucleoproteins (vRNP) packaged in virions. Interacts with hepatitis C virus core protein p19. In terms of tissue distribution, widely expressed. Expressed at high level in heart and skeletal muscle. Expressed at intermediate level in liver, pancreas, fetal brain and fetal lung. Weakly expressed in adult brain, adult lung, placenta, fetal liver and fetal kidney. Overexpressed in many brain tumors.

The protein resides in the nucleus. It localises to the cytoplasm. Its subcellular location is the cytosol. It is found in the perinuclear region. The protein localises to the cytoskeleton. The protein resides in the microtubule organizing center. It localises to the centrosome. Functionally, RNA-binding protein involved in modulation of mRNA transcription by Polymerase II. Component of the tRNA-splicing ligase complex and is required for tRNA ligation. May be required for RNA transport. Its function is as follows. (Microbial infection) In case of infection by influenza virus A (IVA), is involved in viral replication. The protein is RNA transcription, translation and transport factor protein of Homo sapiens (Human).